Consider the following 242-residue polypeptide: MIEYKNVALRYTEKDVLRDVNLQIEDGEFMVLVGPSGSGKTTMLKMINRLLEPTDGNIYMDGKRIKDYDERELRLSTGYVLQAIALFPNLTVEENIALIPEMKGWTKEEIAQKTEELLAKVGLPVAEYGHRLPSELSGGEQQRVGIVRAMIGQPKILLMDEPFSALDAISRKQLQVLTKELHKEFGMTTIFVTHDTDEALKLADRIAVLQDGEIRQVSNPETILKAPATDFVADLFGGSIHD.

In terms of domain architecture, ABC transporter spans 2–236 (IEYKNVALRY…PATDFVADLF (235 aa)). 34-41 (GPSGSGKT) lines the ATP pocket.

It belongs to the ABC transporter superfamily. In terms of assembly, the complex is probably composed of at least an ATP-binding protein (EgtUA) and a transmembrane protein (EgtUBC).

The protein localises to the cell inner membrane. It carries out the reaction ergothioneine(out) + ATP + H2O = ergothioneine(in) + ADP + phosphate + H(+). Functionally, part of an ABC transporter complex EgtU required for the uptake of ergothioneine (EGT), a natural low-molecular weight (LMW) thiol antioxidant. Probably responsible for energy coupling to the transport system. This is Probable ergothioneine transport ATP-binding protein EgtUA from Streptococcus pneumoniae serotype 2 (strain D39 / NCTC 7466).